We begin with the raw amino-acid sequence, 120 residues long: NAD(P)H-quinone oxidoreductase subunit 3, chloroplastic (120 aa).

3 consecutive transmembrane segments (helical) span residues 9-29, 64-84, and 88-108; these read IFWAFLIISSLIPILAFFISG, MFALVFVVFDVETVFLYPWAM, and VLGVSVFIEALIFVLILIVGL.

This sequence belongs to the complex I subunit 3 family. In terms of assembly, NDH is composed of at least 16 different subunits, 5 of which are encoded in the nucleus.

Its subcellular location is the plastid. It localises to the chloroplast thylakoid membrane. It carries out the reaction a plastoquinone + NADH + (n+1) H(+)(in) = a plastoquinol + NAD(+) + n H(+)(out). The enzyme catalyses a plastoquinone + NADPH + (n+1) H(+)(in) = a plastoquinol + NADP(+) + n H(+)(out). In terms of biological role, NDH shuttles electrons from NAD(P)H:plastoquinone, via FMN and iron-sulfur (Fe-S) centers, to quinones in the photosynthetic chain and possibly in a chloroplast respiratory chain. The immediate electron acceptor for the enzyme in this species is believed to be plastoquinone. Couples the redox reaction to proton translocation, and thus conserves the redox energy in a proton gradient. The protein is NAD(P)H-quinone oxidoreductase subunit 3, chloroplastic of Panax ginseng (Korean ginseng).